The sequence spans 206 residues: Testis-expressed protein 38 (206 aa).

A helical transmembrane segment spans residues 15–35 (VSLYFGILGLCSVITGGCIIF).

Its subcellular location is the membrane. In Homo sapiens (Human), this protein is Testis-expressed protein 38 (TEX38).